Here is a 559-residue protein sequence, read N- to C-terminus: Formate--tetrahydrofolate ligase (559 aa).

67–74 contributes to the ATP binding site; it reads TPAGEGKS.

Belongs to the formate--tetrahydrofolate ligase family.

It catalyses the reaction (6S)-5,6,7,8-tetrahydrofolate + formate + ATP = (6R)-10-formyltetrahydrofolate + ADP + phosphate. Its pathway is one-carbon metabolism; tetrahydrofolate interconversion. The sequence is that of Formate--tetrahydrofolate ligase from Lactobacillus delbrueckii subsp. bulgaricus (strain ATCC 11842 / DSM 20081 / BCRC 10696 / JCM 1002 / NBRC 13953 / NCIMB 11778 / NCTC 12712 / WDCM 00102 / Lb 14).